The sequence spans 251 residues: DNA repair protein RecO (251 aa).

It belongs to the RecO family.

Functionally, involved in DNA repair and RecF pathway recombination. This Lactococcus lactis subsp. cremoris (strain MG1363) protein is DNA repair protein RecO.